The chain runs to 526 residues: Bifunctional purine biosynthesis protein PurH (526 aa).

One can recognise an MGS-like domain in the interval 1-145 (MSKAPLALLS…KNHAHVGIVT (145 aa)).

This sequence belongs to the PurH family.

The catalysed reaction is (6R)-10-formyltetrahydrofolate + 5-amino-1-(5-phospho-beta-D-ribosyl)imidazole-4-carboxamide = 5-formamido-1-(5-phospho-D-ribosyl)imidazole-4-carboxamide + (6S)-5,6,7,8-tetrahydrofolate. It carries out the reaction IMP + H2O = 5-formamido-1-(5-phospho-D-ribosyl)imidazole-4-carboxamide. It participates in purine metabolism; IMP biosynthesis via de novo pathway; 5-formamido-1-(5-phospho-D-ribosyl)imidazole-4-carboxamide from 5-amino-1-(5-phospho-D-ribosyl)imidazole-4-carboxamide (10-formyl THF route): step 1/1. The protein operates within purine metabolism; IMP biosynthesis via de novo pathway; IMP from 5-formamido-1-(5-phospho-D-ribosyl)imidazole-4-carboxamide: step 1/1. This Psychrobacter arcticus (strain DSM 17307 / VKM B-2377 / 273-4) protein is Bifunctional purine biosynthesis protein PurH.